Consider the following 430-residue polypeptide: Enolase (430 aa).

Gln163 is a binding site for (2R)-2-phosphoglycerate. Residue Glu205 is the Proton donor of the active site. Positions 242, 286, and 313 each coordinate Mg(2+). Residues Lys338, Arg367, Ser368, and Lys389 each coordinate (2R)-2-phosphoglycerate. The active-site Proton acceptor is the Lys338.

It belongs to the enolase family. Requires Mg(2+) as cofactor.

It localises to the cytoplasm. It is found in the secreted. The protein localises to the cell surface. It carries out the reaction (2R)-2-phosphoglycerate = phosphoenolpyruvate + H2O. The protein operates within carbohydrate degradation; glycolysis; pyruvate from D-glyceraldehyde 3-phosphate: step 4/5. Functionally, catalyzes the reversible conversion of 2-phosphoglycerate (2-PG) into phosphoenolpyruvate (PEP). It is essential for the degradation of carbohydrates via glycolysis. The sequence is that of Enolase from Symbiobacterium thermophilum (strain DSM 24528 / JCM 14929 / IAM 14863 / T).